Here is a 201-residue protein sequence, read N- to C-terminus: FMN-dependent NADH:quinone oxidoreductase (201 aa).

FMN contacts are provided by residues serine 9 and 16-18; that span reads SYS.

This sequence belongs to the azoreductase type 1 family. As to quaternary structure, homodimer. FMN serves as cofactor.

The catalysed reaction is 2 a quinone + NADH + H(+) = 2 a 1,4-benzosemiquinone + NAD(+). The enzyme catalyses N,N-dimethyl-1,4-phenylenediamine + anthranilate + 2 NAD(+) = 2-(4-dimethylaminophenyl)diazenylbenzoate + 2 NADH + 2 H(+). Quinone reductase that provides resistance to thiol-specific stress caused by electrophilic quinones. In terms of biological role, also exhibits azoreductase activity. Catalyzes the reductive cleavage of the azo bond in aromatic azo compounds to the corresponding amines. This is FMN-dependent NADH:quinone oxidoreductase from Mesomycoplasma hyopneumoniae (strain J / ATCC 25934 / NCTC 10110) (Mycoplasma hyopneumoniae).